The following is a 469-amino-acid chain: Protein HEAT STRESS TOLERANT DWD 1 (469 aa).

Residues 1 to 15 show a composition bias toward basic residues; that stretch reads MGRNVKTKAKRKNKK. 2 disordered regions span residues 1–29 and 115–150; these read MGRN…SIPT and DVVP…KTPN. Over residues 124 to 143 the composition is skewed to acidic residues; sequence GEDEDEDDEDDSDSDDDDGD. WD repeat units follow at residues 157–197, 221–261, 267–307, 311–351, 358–398, and 425–464; these read AHHG…NALA, GHKD…WAVD, GHTA…SPAL, AHNA…GGDA, YHKH…DEEE, and QGQK…NTLP.

The protein belongs to the WD repeat RBAP46/RBAP48/MSI1 family. As to quaternary structure, probable component of CULLIN4 (CUL4) RING ligase (CRL4) complexes. Interacts with DDB1A and DDB1B. Associates with HSP90-1.

The protein operates within protein modification; protein ubiquitination. Probable substrate receptor of CRL4 E3 ligase complexes acting as negative regulators of thermotolerance by disturbing the action of HSP90-1 and by preventing the expression of heat-inducible genes (e.g. HSP14.7, HSP21, At2g03020 and WRKY28). The sequence is that of Protein HEAT STRESS TOLERANT DWD 1 from Arabidopsis thaliana (Mouse-ear cress).